The primary structure comprises 256 residues: Undecaprenyl-diphosphatase (256 aa).

The next 7 helical transmembrane spans lie at 8-28, 41-61, 75-95, 96-116, 175-195, 208-228, and 236-256; these read VLGI…GHLI, FVKS…VVLY, IIAA…LIKG, FLIG…IILI, AEFS…YDLI, ILII…KWFL, and LKIF…FFLF.

The protein belongs to the UppP family.

Its subcellular location is the cell inner membrane. It carries out the reaction di-trans,octa-cis-undecaprenyl diphosphate + H2O = di-trans,octa-cis-undecaprenyl phosphate + phosphate + H(+). Its function is as follows. Catalyzes the dephosphorylation of undecaprenyl diphosphate (UPP). Confers resistance to bacitracin. The chain is Undecaprenyl-diphosphatase from Aquifex aeolicus (strain VF5).